The sequence spans 89 residues: Cell division topological specificity factor (89 aa).

Belongs to the MinE family.

In terms of biological role, prevents the cell division inhibition by proteins MinC and MinD at internal division sites while permitting inhibition at polar sites. This ensures cell division at the proper site by restricting the formation of a division septum at the midpoint of the long axis of the cell. The sequence is that of Cell division topological specificity factor from Legionella pneumophila (strain Paris).